A 363-amino-acid polypeptide reads, in one-letter code: Protein-arginine kinase (363 aa).

One can recognise a Phosphagen kinase C-terminal domain in the interval 24–254; the sequence is IVLSSRIRLA…AQLIEQERSA (231 aa). Residues 27–31, H92, R125, 176–180, and 207–212 each bind ATP; these read SSRIR, RASVM, and RGIYGE. The RDXXRA motif of the pArg binding pocket involved in allosteric regulation motif lies at 337–342; that stretch reads RDARRA.

Belongs to the ATP:guanido phosphotransferase family.

It catalyses the reaction L-arginyl-[protein] + ATP = N(omega)-phospho-L-arginyl-[protein] + ADP + H(+). Its activity is regulated as follows. Appears to be allosterically activated by the binding of pArg-containing polypeptides to the pArg-binding pocket localized in the C-terminal domain of McsB. Its function is as follows. Catalyzes the specific phosphorylation of arginine residues in a large number of proteins. Is part of the bacterial stress response system. Protein arginine phosphorylation has a physiologically important role and is involved in the regulation of many critical cellular processes, such as protein homeostasis, motility, competence, and stringent and stress responses, by regulating gene expression and protein activity. This chain is Protein-arginine kinase, found in Bacillus velezensis (strain DSM 23117 / BGSC 10A6 / LMG 26770 / FZB42) (Bacillus amyloliquefaciens subsp. plantarum).